Reading from the N-terminus, the 408-residue chain is S-adenosylmethionine synthase (408 aa).

142–147 (GEGSGD) contacts ATP.

This sequence belongs to the AdoMet synthase 2 family. It depends on Mg(2+) as a cofactor.

The catalysed reaction is L-methionine + ATP + H2O = S-adenosyl-L-methionine + phosphate + diphosphate. It participates in amino-acid biosynthesis; S-adenosyl-L-methionine biosynthesis; S-adenosyl-L-methionine from L-methionine: step 1/1. In terms of biological role, catalyzes the formation of S-adenosylmethionine from methionine and ATP. The sequence is that of S-adenosylmethionine synthase from Halobacterium salinarum (strain ATCC 29341 / DSM 671 / R1).